Consider the following 1358-residue polypeptide: DNA-directed RNA polymerase subunit beta (1358 aa).

It belongs to the RNA polymerase beta chain family. In terms of assembly, the RNAP catalytic core consists of 2 alpha, 1 beta, 1 beta' and 1 omega subunit. When a sigma factor is associated with the core the holoenzyme is formed, which can initiate transcription.

The catalysed reaction is RNA(n) + a ribonucleoside 5'-triphosphate = RNA(n+1) + diphosphate. Its function is as follows. DNA-dependent RNA polymerase catalyzes the transcription of DNA into RNA using the four ribonucleoside triphosphates as substrates. The polypeptide is DNA-directed RNA polymerase subunit beta (Azotobacter vinelandii (strain DJ / ATCC BAA-1303)).